The following is a 314-amino-acid chain: tRNA selenocysteine 1-associated protein 1 (314 aa).

2 RRM domains span residues 2–85 (NSLW…RSNY) and 94–173 (FSLF…LASS).

The protein belongs to the RRM TRSPAP family.

The protein localises to the nucleus. It localises to the cytoplasm. In terms of biological role, involved in the early steps of selenocysteine biosynthesis and tRNA(Sec) charging to the later steps resulting in the cotranslational incorporation of selenocysteine into selenoproteins. The protein is tRNA selenocysteine 1-associated protein 1 of Danio rerio (Zebrafish).